The following is a 466-amino-acid chain: 3-isopropylmalate dehydratase large subunit (466 aa).

[4Fe-4S] cluster is bound by residues C349, C410, and C413.

Belongs to the aconitase/IPM isomerase family. LeuC type 1 subfamily. In terms of assembly, heterodimer of LeuC and LeuD. Requires [4Fe-4S] cluster as cofactor.

It carries out the reaction (2R,3S)-3-isopropylmalate = (2S)-2-isopropylmalate. The protein operates within amino-acid biosynthesis; L-leucine biosynthesis; L-leucine from 3-methyl-2-oxobutanoate: step 2/4. Catalyzes the isomerization between 2-isopropylmalate and 3-isopropylmalate, via the formation of 2-isopropylmaleate. This is 3-isopropylmalate dehydratase large subunit from Ruthia magnifica subsp. Calyptogena magnifica.